A 463-amino-acid chain; its full sequence is Mitochondrial dynamics protein MIEF1 (463 aa).

Over 1–23 (MAGAGERKGKKDDNGIGTAIDFV) the chain is Mitochondrial intermembrane. A helical membrane pass occupies residues 24–46 (LSNARLVLGVGGAAMLGIATLAV). Residues 47-463 (KRMYDRAISA…LSEPEVLLQT (417 aa)) lie on the Cytoplasmic side of the membrane. Positions 49-195 (MYDRAISAPT…LSGSLYDDLQ (147 aa)) are dimerization. S55, S59, S79, and S94 each carry phosphoserine. A disordered region spans residues 57–77 (PTSPTRLSHSGKRSWEEPNWM). Positions 96 to 123 (QTLPTDSSTFDTDTFCPPRPKPVARKGQ) are disordered. Residues 100 to 110 (TDSSTFDTDTF) are compositionally biased toward low complexity. Positions 160–169 (AAVDICAELR) are important for interaction with DNM1L. ADP-binding residues include S187, S189, and H201. The tract at residues 234-242 (RRENPEYFP) is important for interaction with DNM1L. ADP contacts are provided by S340, R342, and K368.

Belongs to the SMCR7 family. In terms of assembly, homodimer. Interacts with DNM1L. In terms of tissue distribution, expression is relatively high in heart, skeletal muscle, pancreas and kidney.

Its subcellular location is the mitochondrion outer membrane. In terms of biological role, mitochondrial outer membrane protein which regulates mitochondrial fission/fusion dynamics. Promotes the recruitment and association of the fission mediator dynamin-related protein 1 (DNM1L) to the mitochondrial surface independently of the mitochondrial fission FIS1 and MFF proteins. Regulates DNM1L GTPase activity and DNM1L oligomerization. Binds ADP and can also bind GDP, although with lower affinity. Does not bind CDP, UDP, ATP, AMP or GTP. Inhibits DNM1L GTPase activity in the absence of bound ADP. Requires ADP to stimulate DNM1L GTPase activity and the assembly of DNM1L into long, oligomeric tubules with a spiral pattern, as opposed to the ring-like DNM1L oligomers observed in the absence of bound ADP. Does not require ADP for its function in recruiting DNM1L. The sequence is that of Mitochondrial dynamics protein MIEF1 from Homo sapiens (Human).